Here is a 346-residue protein sequence, read N- to C-terminus: Coproporphyrin III ferrochelatase (346 aa).

2 residues coordinate Fe-coproporphyrin III: serine 52 and tyrosine 121. Fe(2+) is bound by residues histidine 181 and glutamate 264.

It belongs to the ferrochelatase family.

The protein localises to the cytoplasm. The catalysed reaction is Fe-coproporphyrin III + 2 H(+) = coproporphyrin III + Fe(2+). It functions in the pathway porphyrin-containing compound metabolism; protoheme biosynthesis. Functionally, involved in coproporphyrin-dependent heme b biosynthesis. Catalyzes the insertion of ferrous iron into coproporphyrin III to form Fe-coproporphyrin III. The chain is Coproporphyrin III ferrochelatase from Mycobacterium sp. (strain JLS).